The chain runs to 213 residues: Uracil phosphoribosyltransferase (213 aa).

5-phospho-alpha-D-ribose 1-diphosphate is bound by residues R78, R103, and 131–139 (DPMLATGGT). Uracil contacts are provided by residues I197 and 202–204 (GDA). D203 lines the 5-phospho-alpha-D-ribose 1-diphosphate pocket.

It belongs to the UPRTase family. The cofactor is Mg(2+).

It carries out the reaction UMP + diphosphate = 5-phospho-alpha-D-ribose 1-diphosphate + uracil. The protein operates within pyrimidine metabolism; UMP biosynthesis via salvage pathway; UMP from uracil: step 1/1. With respect to regulation, allosterically activated by GTP. Its function is as follows. Catalyzes the conversion of uracil and 5-phospho-alpha-D-ribose 1-diphosphate (PRPP) to UMP and diphosphate. The sequence is that of Uracil phosphoribosyltransferase from Bifidobacterium longum subsp. infantis (strain ATCC 15697 / DSM 20088 / JCM 1222 / NCTC 11817 / S12).